Here is a 244-residue protein sequence, read N- to C-terminus: Thiol S-methyltransferase TMT1B (244 aa).

Positions 1–23 are cleaved as a signal peptide; the sequence is MDILVPLLQLLVLLLTLPLHLMA.

It belongs to the methyltransferase superfamily. In terms of tissue distribution, expressed in the liver.

It localises to the endoplasmic reticulum membrane. The protein localises to the lipid droplet. Its subcellular location is the microsome. The protein resides in the cytoplasm. It is found in the cytosol. It catalyses the reaction a thiol + S-adenosyl-L-methionine = a methyl thioether + S-adenosyl-L-homocysteine + H(+). Its function is as follows. Thiol S-methyltransferase that catalyzes the transfer of a methyl group from S-adenosyl-L-methionine to alkyl and phenolic thiol-containing acceptor substrates. Together with TMT1B accounts for most of S-thiol methylation activity in the endoplasmic reticulum of hepatocytes. Selectively methylates S-centered nucleophiles from metabolites such as hydrogen sulfide and dithiothreitol. In Homo sapiens (Human), this protein is Thiol S-methyltransferase TMT1B.